Consider the following 325-residue polypeptide: Diacylglycerol acyltransferase/mycolyltransferase Ag85B (325 aa).

Positions 1–40 (MTDVSRKIRAWGRRLMIGTAAAVVLPGLVGLAGGAATAGA) are cleaved as a signal peptide. 82–83 (LR) is a binding site for substrate. The segment at 98–108 (FEWYYQSGLSI) is fibronectin-binding. The cysteines at positions 127 and 132 are disulfide-linked. Residues serine 166 and aspartate 194 each coordinate substrate. The active-site Nucleophile is serine 166. Glutamate 270 is a catalytic residue. Substrate-binding positions include 272 to 275 (FVRS), lysine 279, and 302 to 304 (HSW). Histidine 302 is an active-site residue.

It belongs to the mycobacterial A85 antigen family.

It localises to the secreted. It carries out the reaction 2 alpha,alpha'-trehalose 6-mycolate = alpha,alpha'-trehalose 6,6'-bismycolate + alpha,alpha-trehalose. It catalyses the reaction an acyl-CoA + a 1,2-diacyl-sn-glycerol = a triacyl-sn-glycerol + CoA. The antigen 85 proteins (FbpA, FbpB, FbpC) are responsible for the high affinity of mycobacteria for fibronectin, a large adhesive glycoprotein, which facilitates the attachment of M.tuberculosis to murine alveolar macrophages (AMs). They also help to maintain the integrity of the cell wall by catalyzing the transfer of mycolic acids to cell wall arabinogalactan and through the synthesis of alpha,alpha-trehalose dimycolate (TDM, cord factor). They catalyze the transfer of a mycoloyl residue from one molecule of alpha,alpha-trehalose monomycolate (TMM) to another TMM, leading to the formation of TDM. The chain is Diacylglycerol acyltransferase/mycolyltransferase Ag85B (fbpB) from Mycobacterium tuberculosis (strain ATCC 25177 / H37Ra).